Here is a 228-residue protein sequence, read N- to C-terminus: Cytochrome c oxidase subunit 2 (228 aa).

Residues 1–14 (MAYPFQLGFQDATS) lie on the Mitochondrial intermembrane side of the membrane. The chain crosses the membrane as a helical span at residues 15-45 (PIMEELLHFHDHTLMIVFLISSLVLYIISLM). Residues 46–59 (LTTKLTHTSTMDAQ) lie on the Mitochondrial matrix side of the membrane. Residues 60–87 (EVETIWTILPAIILILIALPSLRILYMM) traverse the membrane as a helical segment. Residues 88-228 (DEINNPALTV…FEKWSTSMLT (141 aa)) are Mitochondrial intermembrane-facing. Cu cation is bound by residues His161, Cys196, Glu198, Cys200, His204, and Met207. Glu198 serves as a coordination point for Mg(2+). Phosphotyrosine is present on Tyr218.

It belongs to the cytochrome c oxidase subunit 2 family. Component of the cytochrome c oxidase (complex IV, CIV), a multisubunit enzyme composed of 14 subunits. The complex is composed of a catalytic core of 3 subunits MT-CO1, MT-CO2 and MT-CO3, encoded in the mitochondrial DNA, and 11 supernumerary subunits COX4I, COX5A, COX5B, COX6A, COX6B, COX6C, COX7A, COX7B, COX7C, COX8 and NDUFA4, which are encoded in the nuclear genome. The complex exists as a monomer or a dimer and forms supercomplexes (SCs) in the inner mitochondrial membrane with NADH-ubiquinone oxidoreductase (complex I, CI) and ubiquinol-cytochrome c oxidoreductase (cytochrome b-c1 complex, complex III, CIII), resulting in different assemblies (supercomplex SCI(1)III(2)IV(1) and megacomplex MCI(2)III(2)IV(2)). Found in a complex with TMEM177, COA6, COX18, COX20, SCO1 and SCO2. Interacts with TMEM177 in a COX20-dependent manner. Interacts with COX20. Interacts with COX16. The cofactor is Cu cation.

It is found in the mitochondrion inner membrane. It carries out the reaction 4 Fe(II)-[cytochrome c] + O2 + 8 H(+)(in) = 4 Fe(III)-[cytochrome c] + 2 H2O + 4 H(+)(out). In terms of biological role, component of the cytochrome c oxidase, the last enzyme in the mitochondrial electron transport chain which drives oxidative phosphorylation. The respiratory chain contains 3 multisubunit complexes succinate dehydrogenase (complex II, CII), ubiquinol-cytochrome c oxidoreductase (cytochrome b-c1 complex, complex III, CIII) and cytochrome c oxidase (complex IV, CIV), that cooperate to transfer electrons derived from NADH and succinate to molecular oxygen, creating an electrochemical gradient over the inner membrane that drives transmembrane transport and the ATP synthase. Cytochrome c oxidase is the component of the respiratory chain that catalyzes the reduction of oxygen to water. Electrons originating from reduced cytochrome c in the intermembrane space (IMS) are transferred via the dinuclear copper A center (CU(A)) of subunit 2 and heme A of subunit 1 to the active site in subunit 1, a binuclear center (BNC) formed by heme A3 and copper B (CU(B)). The BNC reduces molecular oxygen to 2 water molecules using 4 electrons from cytochrome c in the IMS and 4 protons from the mitochondrial matrix. The chain is Cytochrome c oxidase subunit 2 (MT-CO2) from Sus scrofa (Pig).